A 536-amino-acid polypeptide reads, in one-letter code: SNW domain-containing protein 1 (536 aa).

Residues 1–46 are disordered; sequence MALTSFLPAPTQLSQDQLEAEEKARSQRSRQTSLVSSRREPPPYGY. Ala-2 is modified (N-acetylalanine). A Phosphoserine modification is found at Ser-14. A Glycyl lysine isopeptide (Lys-Gly) (interchain with G-Cter in SUMO2) cross-link involves residue Lys-23. The interaction with PPIL1 stretch occupies residues 59–79; that stretch reads GDGGAFPEIHVAQYPLDMGRK. Residues Lys-81, Lys-97, Lys-115, Lys-122, Lys-141, Lys-158, and Lys-170 each participate in a glycyl lysine isopeptide (Lys-Gly) (interchain with G-Cter in SUMO2) cross-link. The SNW stretch occupies residues 174-339; sequence AQYIRYTPSQ…KARERRAGIK (166 aa). Residues Ser-182 and Ser-190 each carry the phosphoserine modification. Residue Lys-193 forms a Glycyl lysine isopeptide (Lys-Gly) (interchain with G-Cter in SUMO2) linkage. The tract at residues 209 to 233 is disordered; it reads PPRFKINKKIPRGPPSPPAPVMHSP. Ser-224, Ser-232, and Ser-234 each carry phosphoserine. Residues Lys-240, Lys-258, Lys-286, Lys-339, Lys-344, Lys-416, Lys-441, and Lys-452 each participate in a glycyl lysine isopeptide (Lys-Gly) (interchain with G-Cter in SUMO2) cross-link. The tract at residues 311 to 386 is disordered; it reads KMAQKEKEKH…RSKLQRNENR (76 aa). Basic and acidic residues-rich tracts occupy residues 472-489 and 503-530; these read FVPD…RGRE and KFLE…EHEG. Positions 472-536 are disordered; it reads FVPDKEFSGS…EHEGKKRRKE (65 aa). 2 positions are modified to phosphoserine: Ser-479 and Ser-481. A Glycyl lysine isopeptide (Lys-Gly) (interchain with G-Cter in SUMO2) cross-link involves residue Lys-509.

It belongs to the SNW family. As to quaternary structure, identified in the spliceosome C complex. Associates with U4/U6-U5 tri-small nuclear ribonucleoproteins (U4/U6-U5 tri-snRNPs). Component of the minor spliceosome, which splices U12-type introns. Interacts with SKI, SMAD2,SMAD3, RBPJ, RB1, PABPN1, MAGEA1, SIRT1, FOXN3, U2AF2, PPIL1, DAXX and ATP1B4. Interacts with VDR and RXRA; preferentially associates with VDR:RXRA heterodimers. Interacts with NCOR2. Interacts with MAML1. Interacts with NOTCH1 NICD; the interaction involves multimerized NOTCH1 NICD. Forms a complex with NOTCH1 NICD and MAML1; the association is dissociated by RBPJ. Associates with positive transcription elongation factor b (P-TEFb). Component of the SNARP complex which consists at least of SNIP1, SNW1, THRAP3, BCLAF1 and PNN.

The protein localises to the nucleus. In terms of biological role, involved in pre-mRNA splicing as component of the spliceosome. As a component of the minor spliceosome, involved in the splicing of U12-type introns in pre-mRNAs. Required in the specific splicing of CDKN1A pre-mRNA; the function probably involves the recruitment of U2AF2 to the mRNA. May recruit PPIL1 to the spliceosome. May be involved in cyclin-D1/CCND1 mRNA stability through the SNARP complex which associates with both the 3'end of the CCND1 gene and its mRNA. Involved in transcriptional regulation. Modulates TGF-beta-mediated transcription via association with SMAD proteins, MYOD1-mediated transcription via association with PABPN1, RB1-mediated transcriptional repression, and retinoid-X receptor (RXR)- and vitamin D receptor (VDR)-dependent gene transcription in a cell line-specific manner probably involving coactivators NCOA1 and GRIP1. Is involved in NOTCH1-mediated transcriptional activation. Binds to multimerized forms of Notch intracellular domain (NICD) and is proposed to recruit transcriptional coactivators such as MAML1 to form an intermediate preactivation complex which associates with DNA-bound CBF-1/RBPJ to form a transcriptional activation complex by releasing SNW1 and redundant NOTCH1 NICD. This chain is SNW domain-containing protein 1 (SNW1), found in Bos taurus (Bovine).